We begin with the raw amino-acid sequence, 477 residues long: ETS translocation variant 1 (477 aa).

Serine 94 carries the phosphoserine modification. Residues 128 to 178 (PQVGMRPSNPPTPSSTPVSPLHHASPNSAHTSKPDRAFPAHLPPSQPIQDS) form a disordered region. Residues serine 191 and serine 216 each carry the phosphoserine; by RPS6KA1 and RPS6KA5 modification. Residue lysine 317 forms a Glycyl lysine isopeptide (Lys-Gly) (interchain with G-Cter in SUMO2) linkage. Positions 335 to 415 (LQLWQFLVAL…AGERYVYKFV (81 aa)) form a DNA-binding region, ETS.

Belongs to the ETS family. Post-translationally, sumoylated. Phosphorylated at Ser-191 and Ser-216 by RPS6KA1 and RPS6KA5; phosphorylation activates transcriptional activity.

The protein localises to the nucleus. In terms of biological role, transcriptional activator that binds to DNA sequences containing the consensus pentanucleotide 5'-CGGA[AT]-3'. Required for olfactory dopaminergic neuron differentiation; may directly activate expression of tyrosine hydroxylase (TH). The protein is ETS translocation variant 1 (ETV1) of Bos taurus (Bovine).